Reading from the N-terminus, the 91-residue chain is Antifungal protein opdH (91 aa).

Positions 1 to 18 (MQFSSLSLVFLAVIGAIA) are cleaved as a signal peptide. Positions 19–33 (NPIAVDSELENRDVQ) are excised as a propeptide. Intrachain disulfides connect cysteine 41–cysteine 69, cysteine 48–cysteine 76, and cysteine 61–cysteine 87.

The protein belongs to the antifungal protein pafB family.

It localises to the secreted. It is found in the host cytoplasm. Its function is as follows. Antifungal protein; part of the gene cluster that mediates the biosynthesis of oxopyrrolidines, polyketide-amino acid hybrid compounds with feature structures of tetramic acid. Acts as an inhibitor of growth of various molds and yeasts. This Penicillium oxalicum (strain 114-2 / CGMCC 5302) (Penicillium decumbens) protein is Antifungal protein opdH.